The primary structure comprises 1040 residues: Kinesin-like protein KIN-14H (1040 aa).

Positions 54 to 176 (DLRRYEAARW…CVLALKSYRE (123 aa)) constitute a Calponin-homology (CH) domain. A disordered region spans residues 208-242 (SEVPVDAVTNSPSSTPSSEQPLLDQSDSNTKNDGT). A compositionally biased stretch (polar residues) spans 215 to 242 (VTNSPSSTPSSEQPLLDQSDSNTKNDGT). The region spanning 434–754 (SIRVYCRVRP…LKFAERVATV (321 aa)) is the Kinesin motor domain. 517-524 (GQTGSGKT) contacts ATP. A coiled-coil region spans residues 761–796 (VNKDTSEVKELKEQIASLKLALARKESGADQTQLQR). A compositionally biased stretch (low complexity) spans 809–818 (LGVSSSFSKS). Disordered stretches follow at residues 809–871 (LGVS…GKEE), 887–926 (EDEI…KCNS), and 969–1040 (MPRP…QNPK). Residues 840-851 (IEGQSDSASSLD) show a composition bias toward polar residues. The span at 887–923 (EDEITRSSKPENRAHTQLEKRTSSLKREATRGVDKNK) shows a compositional bias: basic and acidic residues. Over residues 1018 to 1031 (SPGQTSSRHNNSTV) the composition is skewed to polar residues.

This sequence belongs to the TRAFAC class myosin-kinesin ATPase superfamily. Kinesin family. KIN-14 subfamily.

The chain is Kinesin-like protein KIN-14H from Arabidopsis thaliana (Mouse-ear cress).